We begin with the raw amino-acid sequence, 744 residues long: MEQTYQYAWIIPFLPLPVPMLIGLGLLLFPTATKSLRRMWAFQSVLLLSIVMIFSMNLSIQQINSSSVYQYVWSWIINNDFSLEFGYLIDPLTSIMSILITTVGIMVLIYSDNYMSHDHGYLRFFAYMSFFSTSMLGLVTSSNLIQIYIFWELVGICSYLLIGFWFTRPVAAKACQKAFVTNRVGDFGLLLGILGFYWITGSFEFRNLFQIFNNLISNNEVNLLFVTLCAVLLFAGAIAKSAQFPLHVWLPDAMEGPTPISALIHAATMVAAGIFLVARLLPLFIVIPHIMNFISLIGIITVFLGATLALAQKDIKRGLAYSTMSQLGYMMLALGMGSYRSALFHLITHAYSKALLFLGSGSVIHSMETLVGYCPKKSQNMVLMGGLTKHVPITKTSFLLGTLSLCGIPPLACFWSKDEILNDSWLYSPIFAIIAWSTAGLTAFYMCRIYLLTFEGHLNVQFQNYSGKKNTPFYSISLWGKEGSKISNKNFRLVTLLKMKKNGRASFFSNKVYKIDENLRNIIQPFLSIPHFGTTKTYSYPYESDNTMLFPILILVLFTLFVGFLGIPFNQDGVDLDILSKWLTPSINLLHKNSNNSIDWYEFCKDAVFSVTISSFGIFIAFFLYKPVYSSFQNLDLINSFVKIDPKRIFSDKIKNGIYDWSYNRGYIDAFYGTFLTVGIRKLAEFAHFFDRRIIDGIPNGVGLMSFFVAEVIKSVGGGRISSYLFFYFSYVSIFLVIYYFLNF.

Transmembrane regions (helical) follow at residues 9 to 29 (WIIPFLPLPVPMLIGLGLLLF), 40 to 60 (WAFQSVLLLSIVMIFSMNLSI), 89 to 109 (IDPLTSIMSILITTVGIMVLI), 125 to 145 (FAYMSFFSTSMLGLVTSSNLI), 147 to 167 (IYIFWELVGICSYLLIGFWFT), 185 to 205 (GDFGLLLGILGFYWITGSFEF), 219 to 239 (NEVNLLFVTLCAVLLFAGAIA), 258 to 278 (TPISALIHAATMVAAGIFLVA), 290 to 312 (IMNFISLIGIITVFLGATLALAQ), 327 to 347 (LGYMMLALGMGSYRSALFHLI), 354 to 374 (ALLFLGSGSVIHSMETLVGYC), 396 to 416 (TSFLLGTLSLCGIPPLACFWS), 425 to 445 (WLYSPIFAIIAWSTAGLTAFY), 549 to 569 (LFPILILVLFTLFVGFLGIPF), 608 to 628 (VFSVTISSFGIFIAFFLYKPV), and 724 to 744 (YLFFYFSYVSIFLVIYYFLNF).

It belongs to the complex I subunit 5 family. In terms of assembly, NDH is composed of at least 16 different subunits, 5 of which are encoded in the nucleus.

The protein resides in the plastid. It is found in the chloroplast thylakoid membrane. It catalyses the reaction a plastoquinone + NADH + (n+1) H(+)(in) = a plastoquinol + NAD(+) + n H(+)(out). The enzyme catalyses a plastoquinone + NADPH + (n+1) H(+)(in) = a plastoquinol + NADP(+) + n H(+)(out). Functionally, NDH shuttles electrons from NAD(P)H:plastoquinone, via FMN and iron-sulfur (Fe-S) centers, to quinones in the photosynthetic chain and possibly in a chloroplast respiratory chain. The immediate electron acceptor for the enzyme in this species is believed to be plastoquinone. Couples the redox reaction to proton translocation, and thus conserves the redox energy in a proton gradient. The chain is NAD(P)H-quinone oxidoreductase subunit 5, chloroplastic (ndhF) from Adenocaulon himalaicum (Trailplant).